A 124-amino-acid polypeptide reads, in one-letter code: MIRRSPLVAVILFVAITHVVLALDDATRIDSSEIVPSEPTRRTRVSPHYISSGGSKRSLRQQAFRPVAYLKNKLNWFLSRFFGTPTDAFTQMNSPRSSRIANIFRKIYMHTAKDDEYFSRLRSV.

Residues 1–22 (MIRRSPLVAVILFVAITHVVLA) form the signal peptide. Residues 57 to 60 (RSLR) carry the RxLR motif.

The protein belongs to the RxLR effector family.

The protein resides in the secreted. Its subcellular location is the host cytoplasm. It localises to the host nucleus. Functionally, effector that acts as a broad suppressor of cell death to interrupt plant immunity. Inhibits cell death induced by cell death-inducing proteins, including the PAMP elicitor INF1 from P.infestans. The chain is Secreted RxLR effector protein 49 from Plasmopara viticola (Downy mildew of grapevine).